Reading from the N-terminus, the 419-residue chain is L-rhamnose isomerase (419 aa).

3 residues coordinate Mn(2+): His-262, Asp-294, and Asp-296.

The protein belongs to the rhamnose isomerase family. Homotetramer. The cofactor is Mn(2+).

The protein localises to the cytoplasm. It catalyses the reaction L-rhamnopyranose = L-rhamnulose. Its pathway is carbohydrate degradation; L-rhamnose degradation; glycerone phosphate from L-rhamnose: step 1/3. Its function is as follows. Catalyzes the interconversion of L-rhamnose and L-rhamnulose. The chain is L-rhamnose isomerase from Klebsiella pneumoniae subsp. pneumoniae (strain ATCC 700721 / MGH 78578).